Reading from the N-terminus, the 512-residue chain is DEAD-box ATP-dependent RNA helicase 5 (512 aa).

Disordered stretches follow at residues 1–33 (MGRS…KLEA) and 45–76 (ATST…GGGK). A coiled-coil region spans residues 14–45 (SRKSKKEKKSKKDKKRKLEAEAEVVVVEAAAA). Residues 16 to 30 (KSKKEKKSKKDKKRK) are compositionally biased toward basic residues. The Q motif signature appears at 94-120 (SSFAATALPPQVLDCCKGFERPSPIQA). Residues 123–300 (WPYLLDGRDF…QEFMDPNPIK (178 aa)) form the Helicase ATP-binding domain. Residue 136–143 (AATGSGKT) participates in ATP binding. A DEAD box motif is present at residues 248 to 251 (DEAD). The Helicase C-terminal domain maps to 333–476 (LLDKYHKAQR…VVPPALTKFG (144 aa)).

This sequence belongs to the DEAD box helicase family. DDX5/DBP2 subfamily.

The protein resides in the nucleus. The protein localises to the nucleolus. The enzyme catalyses ATP + H2O = ADP + phosphate + H(+). Its function is as follows. ATP-dependent RNA helicase required for 60S ribosomal subunit synthesis. Involved in efficient pre-rRNA processing, predominantly at site A3, which is necessary for the normal formation of 25S and 5.8S rRNAs. This chain is DEAD-box ATP-dependent RNA helicase 5, found in Oryza sativa subsp. japonica (Rice).